Reading from the N-terminus, the 268-residue chain is Tryptophan synthase alpha chain (268 aa).

Catalysis depends on proton acceptor residues Glu49 and Asp60.

It belongs to the TrpA family. Tetramer of two alpha and two beta chains.

The enzyme catalyses (1S,2R)-1-C-(indol-3-yl)glycerol 3-phosphate + L-serine = D-glyceraldehyde 3-phosphate + L-tryptophan + H2O. It functions in the pathway amino-acid biosynthesis; L-tryptophan biosynthesis; L-tryptophan from chorismate: step 5/5. Functionally, the alpha subunit is responsible for the aldol cleavage of indoleglycerol phosphate to indole and glyceraldehyde 3-phosphate. This chain is Tryptophan synthase alpha chain, found in Escherichia coli O157:H7.